Here is a 159-residue protein sequence, read N- to C-terminus: Biogenesis of lysosome-related organelles complex 1 subunit 2 (159 aa).

A disordered region spans residues 1–37 (MDKPTTSAAAAAAQDSNLLPDSPQHGPTLSSASSFEA). Polar residues predominate over residues 14–36 (QDSNLLPDSPQHGPTLSSASSFE). Positions 69 to 134 (EDYKLLEEMN…KLEAAAYKLD (66 aa)) form a coiled coil.

This sequence belongs to the BLOC1S2 family. In terms of assembly, homodimer. Component of the biogenesis of lysosome-related organelles complex-1 (BLOC-1) composed of Blos1, Blos2, Blos3, Blos4, Dysb, Muted, Pldn and Snapin. Interacts with Snapin.

Functionally, component of the biogenesis of lysosome-related organelles complex-1 (BLOC-1) involved in pigment granule biogenesis. This chain is Biogenesis of lysosome-related organelles complex 1 subunit 2, found in Drosophila melanogaster (Fruit fly).